The sequence spans 179 residues: Large ribosomal subunit protein uL5 (179 aa).

This sequence belongs to the universal ribosomal protein uL5 family. Part of the 50S ribosomal subunit; part of the 5S rRNA/L5/L18/L25 subcomplex. Contacts the 5S rRNA and the P site tRNA. Forms a bridge to the 30S subunit in the 70S ribosome.

This is one of the proteins that bind and probably mediate the attachment of the 5S RNA into the large ribosomal subunit, where it forms part of the central protuberance. In the 70S ribosome it contacts protein S13 of the 30S subunit (bridge B1b), connecting the 2 subunits; this bridge is implicated in subunit movement. Contacts the P site tRNA; the 5S rRNA and some of its associated proteins might help stabilize positioning of ribosome-bound tRNAs. The polypeptide is Large ribosomal subunit protein uL5 (Nitrosospira multiformis (strain ATCC 25196 / NCIMB 11849 / C 71)).